The sequence spans 251 residues: PF03932 family protein CutC (251 aa).

Belongs to the CutC family.

The protein localises to the cytoplasm. The chain is PF03932 family protein CutC from Erwinia tasmaniensis (strain DSM 17950 / CFBP 7177 / CIP 109463 / NCPPB 4357 / Et1/99).